The primary structure comprises 306 residues: Putative B3 domain-containing protein Os03g0621600 (306 aa).

A DNA-binding region (TF-B3 1) is located at residues 29–122 (FSVLCLMPIM…QLKTLIFDSS (94 aa)). The disordered stretch occupies residues 139–166 (YDIAMRNSQDEKKKRKQRDISRQGTVKP). Residues 210 to 306 (GYVMNNSSIH…VMDVHIIRRK (97 aa)) constitute a DNA-binding region (TF-B3 2).

It is found in the nucleus. The polypeptide is Putative B3 domain-containing protein Os03g0621600 (Oryza sativa subsp. japonica (Rice)).